A 221-amino-acid chain; its full sequence is MDTLDELLPREKMLRSGIASLSDVELLALFLRTGTPGKDVMTLAKEILQHFGSLYGLLSADFAQFRGVNGIGLAKFAQLKGIAELARRYYSVRMNEESALLSPEMTREFLQSQLTCEEREIFLVIFLDAQHRVLQHSRLFSGTLNHVEVHPREIVREAIKLNASAVILAHNHPSGCAEPSKADKLITERVIKCCQFMDIRVLDHLIIGRGEYVSFAERGWI.

Residues 99–221 (ALLSPEMTRE…YVSFAERGWI (123 aa)) enclose the MPN domain. Zn(2+) is bound by residues His-170, His-172, and Asp-183. The JAMM motif signature appears at 170–183 (HNHPSGCAEPSKAD).

It belongs to the UPF0758 family. YicR subfamily.

This is UPF0758 protein YicR from Salmonella newport (strain SL254).